Consider the following 645-residue polypeptide: Dictomallein-like protein (645 aa).

The N-terminal stretch at methionine 1–alanine 13 is a signal peptide. The interval cysteine 19 to alanine 55 is disordered. The region spanning proline 177 to methionine 448 is the Peptidase M66 domain. Histidine 333 contributes to the Zn(2+) binding site. The active site involves glutamate 334. Residues histidine 337 and histidine 343 each contribute to the Zn(2+) site.

Belongs to the dictomallein family. It depends on Zn(2+) as a cofactor.

The protein localises to the secreted. In Hahella chejuensis (strain KCTC 2396), this protein is Dictomallein-like protein (dtmL).